Reading from the N-terminus, the 190-residue chain is Potassium-transporting ATPase KdpC subunit (190 aa).

A helical membrane pass occupies residues 10–30 (TFLFLLLITGGVYPLLTTALG).

This sequence belongs to the KdpC family. In terms of assembly, the system is composed of three essential subunits: KdpA, KdpB and KdpC.

The protein resides in the cell inner membrane. Its function is as follows. Part of the high-affinity ATP-driven potassium transport (or Kdp) system, which catalyzes the hydrolysis of ATP coupled with the electrogenic transport of potassium into the cytoplasm. This subunit acts as a catalytic chaperone that increases the ATP-binding affinity of the ATP-hydrolyzing subunit KdpB by the formation of a transient KdpB/KdpC/ATP ternary complex. The protein is Potassium-transporting ATPase KdpC subunit of Escherichia coli (strain SMS-3-5 / SECEC).